A 284-amino-acid chain; its full sequence is Diaminopimelate epimerase (284 aa).

Positions 13 and 70 each coordinate substrate. The Proton donor role is filled by Cys-79. Substrate contacts are provided by residues 80-81 (GN), Asn-167, Asn-200, and 218-219 (ER). Cys-227 acts as the Proton acceptor in catalysis. 228 to 229 (GT) is a substrate binding site.

This sequence belongs to the diaminopimelate epimerase family. As to quaternary structure, homodimer.

The protein resides in the cytoplasm. The catalysed reaction is (2S,6S)-2,6-diaminopimelate = meso-2,6-diaminopimelate. It participates in amino-acid biosynthesis; L-lysine biosynthesis via DAP pathway; DL-2,6-diaminopimelate from LL-2,6-diaminopimelate: step 1/1. Functionally, catalyzes the stereoinversion of LL-2,6-diaminopimelate (L,L-DAP) to meso-diaminopimelate (meso-DAP), a precursor of L-lysine and an essential component of the bacterial peptidoglycan. This chain is Diaminopimelate epimerase, found in Prochlorococcus marinus (strain NATL1A).